We begin with the raw amino-acid sequence, 120 residues long: Putative B3 domain-containing protein At3g28853 (120 aa).

The TF-B3 DNA-binding region spans 19–120 (INKRLTQSDV…DKSNEVFYII (102 aa)).

The protein resides in the nucleus. The chain is Putative B3 domain-containing protein At3g28853 from Arabidopsis thaliana (Mouse-ear cress).